Here is a 299-residue protein sequence, read N- to C-terminus: Peroxisomal biogenesis factor 19 (299 aa).

Alanine 2 carries the N-acetylalanine modification. The interval 2–56 (AAAEGGCGAGVEADRELEELLESALDDFDKAKPSPAPSPTISAPDASGPQKRSPG) is docking to the peroxisome membrane and binding to PEX3. The interval 2–91 (AAAEGGCGAG…QATAEFEKAM (90 aa)) is necessary for PEX19 function on peroxisome biogenesis. Residues 25–63 (ALDDFDKAKPSPAPSPTISAPDASGPQKRSPGDTAKDAL) form a disordered region. A phosphoserine mark is found at serine 35, serine 39, serine 54, and serine 66. The residue at position 236 (threonine 236) is a Phosphothreonine. At cysteine 296 the chain carries Cysteine methyl ester. Cysteine 296 is lipidated: S-farnesyl cysteine. Positions 297 to 299 (LIM) are cleaved as a propeptide — removed in mature form.

The protein belongs to the peroxin-19 family. Interacts with a broad range of peroxisomal membrane proteins, including PEX3, PEX10, PEX11A, PEX11B, PEX12, PEX13, PEX14 and PEX16, PXMP2/PMP22, PXMP4/PMP24, SLC25A17/PMP34, ABCD1/ALDP, ABCD2/ALDRP, and ABCD3/PMP70. Also interacts with the tumor suppressor CDKN2A/p19ARF.

The protein resides in the cytoplasm. It localises to the peroxisome membrane. Its function is as follows. Necessary for early peroxisomal biogenesis. Acts both as a cytosolic chaperone and as an import receptor for peroxisomal membrane proteins (PMPs). Binds and stabilizes newly synthesized PMPs in the cytoplasm by interacting with their hydrophobic membrane-spanning domains, and targets them to the peroxisome membrane by binding to the integral membrane protein PEX3. Excludes CDKN2A from the nucleus and prevents its interaction with MDM2, which results in active degradation of TP53. The sequence is that of Peroxisomal biogenesis factor 19 (Pex19) from Rattus norvegicus (Rat).